Reading from the N-terminus, the 164-residue chain is E3 ubiquitin ligase complex SCF subunit sconC (164 aa).

The tract at residues 106–164 (ILAANYLDIKALLDVGCKTVANMIKGKSPEEIRKTFNIQNDFTPEEEDQIRRENEWAEE) is interaction with the F-box domain of F-box proteins.

The protein belongs to the SKP1 family. As to quaternary structure, component of the SCF (SKP1-CUL1-F-box protein) E3 ubiquitin ligase complexes.

The protein operates within protein modification; protein ubiquitination. In terms of biological role, essential component of the SCF (SKP1-CUL1-F-box protein) E3 ubiquitin ligase complexes, which mediate the ubiquitination and subsequent proteasomal degradation of target proteins. Controls sulfur metabolite repression, probably by mediating the inactivation or degradation of the metR transcription factor. This chain is E3 ubiquitin ligase complex SCF subunit sconC (sconC), found in Arthroderma benhamiae (strain ATCC MYA-4681 / CBS 112371) (Trichophyton mentagrophytes).